The chain runs to 1578 residues: Pentafunctional AROM polypeptide (1578 aa).

The interval Met1 to Asn384 is 3-dehydroquinate synthase. NAD(+) is bound by residues Asp44–Asn46, Glu81–Lys84, Gly114–Val116, and Asp119. Arg130 is a 7-phospho-2-dehydro-3-deoxy-D-arabino-heptonate binding site. Thr139–Thr140 is an NAD(+) binding site. Asp146 and Lys152 together coordinate 7-phospho-2-dehydro-3-deoxy-D-arabino-heptonate. Residue Lys161 participates in NAD(+) binding. Position 162 (Asn162) interacts with 7-phospho-2-dehydro-3-deoxy-D-arabino-heptonate. Residues Phe179–Thr182 and Asn190 contribute to the NAD(+) site. Residue Glu194 participates in Zn(2+) binding. 7-phospho-2-dehydro-3-deoxy-D-arabino-heptonate contacts are provided by residues Glu194–Lys197 and Lys250. Glu260 serves as the catalytic Proton acceptor; for 3-dehydroquinate synthase activity. Residues Arg264 to Asn268 and His271 contribute to the 7-phospho-2-dehydro-3-deoxy-D-arabino-heptonate site. His271 lines the Zn(2+) pocket. The active-site Proton acceptor; for 3-dehydroquinate synthase activity is the His275. 7-phospho-2-dehydro-3-deoxy-D-arabino-heptonate-binding residues include His287 and Lys356. A Zn(2+)-binding site is contributed by His287. The interval Val397–Val842 is EPSP synthase. Catalysis depends on Cys824, which acts as the For EPSP synthase activity. The interval Ser864 to Ser1055 is shikimate kinase. Gly871–Thr878 is an ATP binding site. Residues Leu1056–Asp1276 are 3-dehydroquinase. The active-site Proton acceptor; for 3-dehydroquinate dehydratase activity is the His1179. Lys1207 acts as the Schiff-base intermediate with substrate; for 3-dehydroquinate dehydratase activity in catalysis. The shikimate dehydrogenase stretch occupies residues Lys1289–Gly1578.

The protein in the N-terminal section; belongs to the sugar phosphate cyclases superfamily. Dehydroquinate synthase family. It in the 2nd section; belongs to the EPSP synthase family. This sequence in the 3rd section; belongs to the shikimate kinase family. In the 4th section; belongs to the type-I 3-dehydroquinase family. The protein in the C-terminal section; belongs to the shikimate dehydrogenase family. In terms of assembly, homodimer. Requires Zn(2+) as cofactor.

It is found in the cytoplasm. It catalyses the reaction 7-phospho-2-dehydro-3-deoxy-D-arabino-heptonate = 3-dehydroquinate + phosphate. The enzyme catalyses 3-dehydroquinate = 3-dehydroshikimate + H2O. The catalysed reaction is shikimate + NADP(+) = 3-dehydroshikimate + NADPH + H(+). It carries out the reaction shikimate + ATP = 3-phosphoshikimate + ADP + H(+). It catalyses the reaction 3-phosphoshikimate + phosphoenolpyruvate = 5-O-(1-carboxyvinyl)-3-phosphoshikimate + phosphate. It functions in the pathway metabolic intermediate biosynthesis; chorismate biosynthesis; chorismate from D-erythrose 4-phosphate and phosphoenolpyruvate: step 2/7. It participates in metabolic intermediate biosynthesis; chorismate biosynthesis; chorismate from D-erythrose 4-phosphate and phosphoenolpyruvate: step 3/7. Its pathway is metabolic intermediate biosynthesis; chorismate biosynthesis; chorismate from D-erythrose 4-phosphate and phosphoenolpyruvate: step 4/7. The protein operates within metabolic intermediate biosynthesis; chorismate biosynthesis; chorismate from D-erythrose 4-phosphate and phosphoenolpyruvate: step 5/7. It functions in the pathway metabolic intermediate biosynthesis; chorismate biosynthesis; chorismate from D-erythrose 4-phosphate and phosphoenolpyruvate: step 6/7. In terms of biological role, the AROM polypeptide catalyzes 5 consecutive enzymatic reactions in prechorismate polyaromatic amino acid biosynthesis. This Neosartorya fischeri (strain ATCC 1020 / DSM 3700 / CBS 544.65 / FGSC A1164 / JCM 1740 / NRRL 181 / WB 181) (Aspergillus fischerianus) protein is Pentafunctional AROM polypeptide.